We begin with the raw amino-acid sequence, 331 residues long: 5-formaminoimidazole-4-carboxamide-1-(beta)-D-ribofuranosyl 5'-monophosphate synthetase (331 aa).

Residues H9 and S69 each coordinate 5-amino-1-(5-phospho-beta-D-ribosyl)imidazole-4-carboxamide. An ATP-grasp domain is found at 76–322; it reads VELVEKMKVP…IAMELKQGLE (247 aa). Residues 120-179 and E201 contribute to the ATP site; that span reads PDDI…VPVY. N229 is a binding site for 5-amino-1-(5-phospho-beta-D-ribosyl)imidazole-4-carboxamide. 2 residues coordinate Mg(2+): E267 and E280.

It belongs to the phosphohexose mutase family. Mg(2+) serves as cofactor. Requires Mn(2+) as cofactor.

The enzyme catalyses 5-amino-1-(5-phospho-beta-D-ribosyl)imidazole-4-carboxamide + formate + ATP = 5-formamido-1-(5-phospho-D-ribosyl)imidazole-4-carboxamide + ADP + phosphate. Its pathway is purine metabolism; IMP biosynthesis via de novo pathway; 5-formamido-1-(5-phospho-D-ribosyl)imidazole-4-carboxamide from 5-amino-1-(5-phospho-D-ribosyl)imidazole-4-carboxamide (formate route): step 1/1. Catalyzes the ATP- and formate-dependent formylation of 5-aminoimidazole-4-carboxamide-1-beta-d-ribofuranosyl 5'-monophosphate (AICAR) to 5-formaminoimidazole-4-carboxamide-1-beta-d-ribofuranosyl 5'-monophosphate (FAICAR) in the absence of folates. This is 5-formaminoimidazole-4-carboxamide-1-(beta)-D-ribofuranosyl 5'-monophosphate synthetase from Thermococcus kodakarensis (strain ATCC BAA-918 / JCM 12380 / KOD1) (Pyrococcus kodakaraensis (strain KOD1)).